The following is a 264-amino-acid chain: S-adenosylmethionine decarboxylase proenzyme (264 aa).

Catalysis depends on Ser-112, which acts as the Schiff-base intermediate with substrate; via pyruvic acid. A Pyruvic acid (Ser); by autocatalysis modification is found at Ser-112. His-117 serves as the catalytic Proton acceptor; for processing activity. Residue Cys-140 is the Proton donor; for catalytic activity of the active site.

The protein belongs to the prokaryotic AdoMetDC family. Type 2 subfamily. In terms of assembly, heterooctamer of four alpha and four beta chains arranged as a tetramer of alpha/beta heterodimers. The cofactor is pyruvate. Is synthesized initially as an inactive proenzyme. Formation of the active enzyme involves a self-maturation process in which the active site pyruvoyl group is generated from an internal serine residue via an autocatalytic post-translational modification. Two non-identical subunits are generated from the proenzyme in this reaction, and the pyruvate is formed at the N-terminus of the alpha chain, which is derived from the carboxyl end of the proenzyme. The post-translation cleavage follows an unusual pathway, termed non-hydrolytic serinolysis, in which the side chain hydroxyl group of the serine supplies its oxygen atom to form the C-terminus of the beta chain, while the remainder of the serine residue undergoes an oxidative deamination to produce ammonia and the pyruvoyl group blocking the N-terminus of the alpha chain.

The catalysed reaction is S-adenosyl-L-methionine + H(+) = S-adenosyl 3-(methylsulfanyl)propylamine + CO2. It functions in the pathway amine and polyamine biosynthesis; S-adenosylmethioninamine biosynthesis; S-adenosylmethioninamine from S-adenosyl-L-methionine: step 1/1. Catalyzes the decarboxylation of S-adenosylmethionine to S-adenosylmethioninamine (dcAdoMet), the propylamine donor required for the synthesis of the polyamines spermine and spermidine from the diamine putrescine. This chain is S-adenosylmethionine decarboxylase proenzyme, found in Salmonella typhi.